The sequence spans 276 residues: Light-independent protochlorophyllide reductase iron-sulfur ATP-binding protein (276 aa).

Residues 12–17 (GIGKST) and K41 each bind ATP. S16 contributes to the Mg(2+) binding site. [4Fe-4S] cluster-binding residues include C97 and C131. 182-183 (NR) contributes to the ATP binding site.

This sequence belongs to the NifH/BchL/ChlL family. As to quaternary structure, homodimer. Protochlorophyllide reductase is composed of three subunits; BchL, BchN and BchB. Requires [4Fe-4S] cluster as cofactor.

It catalyses the reaction chlorophyllide a + oxidized 2[4Fe-4S]-[ferredoxin] + 2 ADP + 2 phosphate = protochlorophyllide a + reduced 2[4Fe-4S]-[ferredoxin] + 2 ATP + 2 H2O. The protein operates within porphyrin-containing compound metabolism; bacteriochlorophyll biosynthesis (light-independent). In terms of biological role, component of the dark-operative protochlorophyllide reductase (DPOR) that uses Mg-ATP and reduced ferredoxin to reduce ring D of protochlorophyllide (Pchlide) to form chlorophyllide a (Chlide). This reaction is light-independent. The L component serves as a unique electron donor to the NB-component of the complex, and binds Mg-ATP. This Chlorobaculum tepidum (strain ATCC 49652 / DSM 12025 / NBRC 103806 / TLS) (Chlorobium tepidum) protein is Light-independent protochlorophyllide reductase iron-sulfur ATP-binding protein.